The primary structure comprises 493 residues: MSFKDLRSFIDHLEANGELKRISYPVDPHLEMTEIADRVLRAKGPALLFENPKDHHMPVLVNLFGTPKRVAMALGKDDPLALREVGELLAFLKEPEPPRGFKDAIAKIPMFKQALNMPPKTVRNPPCQQVIKTGDEVDLTQLPIQHCWPGDVAPLVTWGLTITKGPRKSRQNLGIYRQQLLGKNKLIMRWLSHRGGALDFADFKQQFPGERYPVVVALGADPVTILGAVTPVPDSMSEYAFAGLLRGERTEVCKALSCDLEVPATSEIILEGYIGPEELAEEGPYGDHTGYYNETDKFPVFTVTHITHRKDAIYHSTYTGRPPDEPAMLGVALNEVFVPILRKQYPEIVDFYLPPEGCSYRMAVISIRKQYPGHAKRVMMGAWSFLRQFMYTKFIVIVDEDVNCRDWQDVIWAITTRMDPKRDTVMIENTPIDYLDFASPVAGLGSKMGLDATNKWEGETNREWGTPIVMDPKVKQKIDSIWDELGIDDSPTL.

Residue asparagine 172 participates in Mn(2+) binding. Residues isoleucine 175–arginine 177, arginine 189–leucine 191, and arginine 194–glycine 195 contribute to the prenylated FMN site. Glutamate 238 serves as a coordination point for Mn(2+). Aspartate 287 acts as the Proton donor in catalysis.

This sequence belongs to the UbiD family. In terms of assembly, homohexamer. Prenylated FMN serves as cofactor. The cofactor is Mn(2+).

The protein localises to the cell membrane. It carries out the reaction a 4-hydroxy-3-(all-trans-polyprenyl)benzoate + H(+) = a 2-(all-trans-polyprenyl)phenol + CO2. It functions in the pathway cofactor biosynthesis; ubiquinone biosynthesis. Catalyzes the decarboxylation of 3-octaprenyl-4-hydroxy benzoate to 2-octaprenylphenol, an intermediate step in ubiquinone biosynthesis. This chain is 3-octaprenyl-4-hydroxybenzoate carboxy-lyase, found in Shewanella baltica (strain OS155 / ATCC BAA-1091).